A 66-amino-acid polypeptide reads, in one-letter code: Large ribosomal subunit protein uL29 (66 aa).

The protein belongs to the universal ribosomal protein uL29 family.

The protein is Large ribosomal subunit protein uL29 of Mesorhizobium japonicum (strain LMG 29417 / CECT 9101 / MAFF 303099) (Mesorhizobium loti (strain MAFF 303099)).